Here is a 220-residue protein sequence, read N- to C-terminus: Lactate utilization protein C (220 aa).

Belongs to the LutC/YkgG family.

Functionally, is involved in L-lactate degradation and allows cells to grow with lactate as the sole carbon source. The protein is Lactate utilization protein C of Anoxybacillus flavithermus (strain DSM 21510 / WK1).